The primary structure comprises 264 residues: Glutamate racemase (264 aa).

Substrate is bound by residues 10 to 11 and 42 to 43; these read DS and YG. Catalysis depends on C73, which acts as the Proton donor/acceptor. Residue 74 to 75 participates in substrate binding; that stretch reads NT. The active-site Proton donor/acceptor is the C181. 182-183 provides a ligand contact to substrate; sequence TH.

The protein belongs to the aspartate/glutamate racemases family.

The enzyme catalyses L-glutamate = D-glutamate. The protein operates within cell wall biogenesis; peptidoglycan biosynthesis. Provides the (R)-glutamate required for cell wall biosynthesis. The polypeptide is Glutamate racemase (Thermoanaerobacter pseudethanolicus (strain ATCC 33223 / 39E) (Clostridium thermohydrosulfuricum)).